The chain runs to 548 residues: Putative F-box protein At1g33020 (548 aa).

The F-box domain occupies 4–53 (AENLDSIPTDLILEIFSRMSTKSIGRCRCVSKLWKSMLGHPYFTELFLTR). Positions 380–404 (KPISPPKQKPKPPSTETSSREDHQG) are disordered. A compositionally biased stretch (pro residues) spans 382–392 (ISPPKQKPKPP).

The polypeptide is Putative F-box protein At1g33020 (Arabidopsis thaliana (Mouse-ear cress)).